Here is a 486-residue protein sequence, read N- to C-terminus: Homoserine O-acetyltransferase (486 aa).

The region spanning 66 to 436 (NVLVICHALT…PEGHDAFLLE (371 aa)) is the AB hydrolase-1 domain. S162 acts as the Nucleophile in catalysis. Positions 248 to 281 (KFSRRSPSIAQQQKAQREETRKPSTVSEHSLQIH) are disordered. 2 stretches are compositionally biased toward polar residues: residues 250 to 261 (SRRSPSIAQQQK) and 270 to 280 (PSTVSEHSLQI). Catalysis depends on residues D401 and H430.

The protein belongs to the AB hydrolase superfamily. MetX family.

The protein localises to the cytoplasm. It carries out the reaction L-homoserine + acetyl-CoA = O-acetyl-L-homoserine + CoA. The protein operates within amino-acid biosynthesis; L-methionine biosynthesis via de novo pathway; O-acetyl-L-homoserine from L-homoserine: step 1/1. Its function is as follows. Commits homoserine to the methionine biosynthesis pathway by catalyzing its O-acetylation. The sequence is that of Homoserine O-acetyltransferase (MET2) from Saccharomyces cerevisiae (strain ATCC 204508 / S288c) (Baker's yeast).